Reading from the N-terminus, the 320-residue chain is Cytochrome f (320 aa).

A signal peptide spans 1-35 (MQTRNTFSWIREEITRSISVSLMIYIITWASISSA). Positions 36, 56, 59, and 60 each coordinate heme. A helical transmembrane segment spans residues 286-305 (VQGLLFFLGSVVLAQIFLVL).

It belongs to the cytochrome f family. As to quaternary structure, the 4 large subunits of the cytochrome b6-f complex are cytochrome b6, subunit IV (17 kDa polypeptide, petD), cytochrome f and the Rieske protein, while the 4 small subunits are PetG, PetL, PetM and PetN. The complex functions as a dimer. It depends on heme as a cofactor. Purified from leaves as a water-soluble monomeric protein with a mass of 28.16 kDa, cleavage occurs after Gln-287 and separates the heme-binding from the membrane.

The protein resides in the plastid. It is found in the chloroplast thylakoid membrane. Functionally, component of the cytochrome b6-f complex, which mediates electron transfer between photosystem II (PSII) and photosystem I (PSI), cyclic electron flow around PSI, and state transitions. This is Cytochrome f (petA) from Brassica rapa subsp. rapa (Turnip).